Consider the following 370-residue polypeptide: Protein commissureless 1 (370 aa).

Topologically, residues Met1–Tyr136 are extracellular. The interval Leu108–His131 is required for vesicular localization. The chain crosses the membrane as a helical span at residues Leu137–Cys157. The Cytoplasmic portion of the chain corresponds to Tyr158–Ala370. Short sequence motifs (PY-motif) lie at residues Pro220–Tyr223 and Leu229–Tyr232. Residues Thr227 to His237 are interaction with Nedd4. Residues Val287–Leu312 form a disordered region. The span at Ser294–Leu312 shows a compositional bias: low complexity.

Belongs to the commissureless family. As to quaternary structure, interacts (probably via PY-motifs) with Nedd4 (via WW2 domain). Interacts with Robo. In terms of processing, ubiquitinated by Nedd4; which promotes endocytosis of the comm/robo complex and comm proteasomal degradation. Not ubiquitinated by Nedd4.

It is found in the cytoplasmic vesicle membrane. The protein resides in the cell membrane. In terms of biological role, controls axon guidance across the CNS midline by preventing the delivery of Robo to the growth cone. This chain is Protein commissureless 1, found in Drosophila melanogaster (Fruit fly).